Here is a 133-residue protein sequence, read N- to C-terminus: Transcriptional regulator MraZ (133 aa).

SpoVT-AbrB domains are found at residues 5–47 (TYEH…SKDD) and 76–119 (TVEI…SKNK).

Belongs to the MraZ family. Forms oligomers.

It is found in the cytoplasm. The protein localises to the nucleoid. The chain is Transcriptional regulator MraZ from Mycoplasma mycoides subsp. mycoides SC (strain CCUG 32753 / NCTC 10114 / PG1).